Here is a 538-residue protein sequence, read N- to C-terminus: Putative cysteine ligase BshC (538 aa).

Positions 248–268 (ISKYKEVQEGLRNQQEVIKEL) form a coiled coil.

The protein belongs to the BshC family.

Involved in bacillithiol (BSH) biosynthesis. May catalyze the last step of the pathway, the addition of cysteine to glucosamine malate (GlcN-Mal) to generate BSH. In Bacillus cereus (strain G9842), this protein is Putative cysteine ligase BshC.